Reading from the N-terminus, the 718-residue chain is Pullulanase (718 aa).

Aspartate 406 (nucleophile) is an active-site residue. Glutamate 435 serves as the catalytic Proton donor.

The protein belongs to the glycosyl hydrolase 13 family.

The enzyme catalyses Hydrolysis of (1-&gt;6)-alpha-D-glucosidic linkages in pullulan, amylopectin and glycogen, and in the alpha- and beta-limit dextrins of amylopectin and glycogen.. The chain is Pullulanase (amyX) from Bacillus subtilis (strain 168).